Here is a 352-residue protein sequence, read N- to C-terminus: N-acetyl-gamma-glutamyl-phosphate reductase (352 aa).

The active site involves Cys-149.

It belongs to the NAGSA dehydrogenase family. Type 1 subfamily.

It is found in the cytoplasm. The enzyme catalyses N-acetyl-L-glutamate 5-semialdehyde + phosphate + NADP(+) = N-acetyl-L-glutamyl 5-phosphate + NADPH + H(+). It functions in the pathway amino-acid biosynthesis; L-arginine biosynthesis; N(2)-acetyl-L-ornithine from L-glutamate: step 3/4. In terms of biological role, catalyzes the NADPH-dependent reduction of N-acetyl-5-glutamyl phosphate to yield N-acetyl-L-glutamate 5-semialdehyde. The chain is N-acetyl-gamma-glutamyl-phosphate reductase from Polynucleobacter asymbioticus (strain DSM 18221 / CIP 109841 / QLW-P1DMWA-1) (Polynucleobacter necessarius subsp. asymbioticus).